A 451-amino-acid chain; its full sequence is Adenylyltransferase and sulfurtransferase MOCS3 (451 aa).

The segment at G42–L62 is disordered. Over residues E43–S52 the composition is skewed to acidic residues. T60 carries the post-translational modification Phosphothreonine. Residues G99, D120, S127–R131, K144, and D188–N189 contribute to the ATP site. The Zn(2+) site is built by C229 and C232. C246 acts as the Glycyl thioester intermediate; for adenylyltransferase activity in catalysis. Zn(2+) contacts are provided by C304 and C307. Residues Q353 to P449 enclose the Rhodanese domain. The active-site Cysteine persulfide intermediate; for sulfurtransferase activity is C408.

It in the N-terminal section; belongs to the HesA/MoeB/ThiF family. UBA4 subfamily. Requires Zn(2+) as cofactor.

The protein localises to the cytoplasm. Its subcellular location is the cytosol. The enzyme catalyses [molybdopterin-synthase sulfur-carrier protein]-C-terminal Gly-Gly + ATP + H(+) = [molybdopterin-synthase sulfur-carrier protein]-C-terminal Gly-Gly-AMP + diphosphate. It catalyses the reaction [molybdopterin-synthase sulfur-carrier protein]-C-terminal Gly-Gly-AMP + S-sulfanyl-L-cysteinyl-[cysteine desulfurase] + AH2 = [molybdopterin-synthase sulfur-carrier protein]-C-terminal-Gly-aminoethanethioate + L-cysteinyl-[cysteine desulfurase] + A + AMP + 2 H(+). Its pathway is tRNA modification; 5-methoxycarbonylmethyl-2-thiouridine-tRNA biosynthesis. The protein operates within cofactor biosynthesis; molybdopterin biosynthesis. In terms of biological role, plays a central role in 2-thiolation of mcm(5)S(2)U at tRNA wobble positions of cytosolic tRNA(Lys), tRNA(Glu) and tRNA(Gln). Also essential during biosynthesis of the molybdenum cofactor. Acts by mediating the C-terminal thiocarboxylation of sulfur carriers URM1 and MOCS2A. Its N-terminus first activates URM1 and MOCS2A as acyl-adenylates (-COAMP), then the persulfide sulfur on the catalytic cysteine is transferred to URM1 and MOCS2A to form thiocarboxylation (-COSH) of their C-terminus. The reaction probably involves hydrogen sulfide that is generated from the persulfide intermediate and that acts as a nucleophile towards URM1 and MOCS2A. Subsequently, a transient disulfide bond is formed. Does not use thiosulfate as sulfur donor; NFS1 probably acting as a sulfur donor for thiocarboxylation reactions. The chain is Adenylyltransferase and sulfurtransferase MOCS3 from Drosophila persimilis (Fruit fly).